A 125-amino-acid chain; its full sequence is Cystatin-like cysteine protease inhibitor EPIC2B (125 aa).

Positions 1–21 are cleaved as a signal peptide; sequence MSFLRPTLALLAVTALVTTSA. An N-linked (GlcNAc...) asparagine glycan is attached at Asn45. Positions 68–72 match the Secondary area of contact motif; that stretch reads QVVSG.

This sequence belongs to the cystatin family. As to quaternary structure, interacts with the host papain-like cysteine protease PIP1. Interacts with the host papain-like cysteine protease RCR3. Interacts with the host papain-like cysteine protease C14.

The protein resides in the secreted. Secreted effector that interacts with and inhibits the pathogenesis-related papain-like cysteine proteases C14, PIP1 and RCR3 of host plants. Inhibition of host proteases by a pathogen extracellular protease inhibitor forms a specific type of defense-counterdefense mechanism between plants and microbial pathogens. The protein is Cystatin-like cysteine protease inhibitor EPIC2B of Phytophthora infestans (strain T30-4) (Potato late blight agent).